The primary structure comprises 590 residues: Negative elongation factor C/D (590 aa).

Residues 16–43 (GSAAEWGDEADGGQQEDDSGEGEDDAEV) are disordered. Acidic residues predominate over residues 21 to 43 (WGDEADGGQQEDDSGEGEDDAEV).

This sequence belongs to the NELF-D family. In terms of assembly, the NELF complex is composed of NELFA, NELFB, NELFCD (isoform NELF-C or isoform NELF-D) and NELFE; NELFA and NELFCD form a stable subcomplex that binds primarily through NELFCD to the N-terminus of NELFB. Binds RNA which may help to stabilize the NELF complex on nucleic acid. In vitro, the NELFA:NELFCD subcomplex binds to ssDNA and ssRNA in a sequence- and structure-dependent manner. Interacts with ARAF. Interacts with PCF11. Interacts with KAT8. As to expression, widely expressed. Expressed in heart, brain, lung, placenta, liver, skeletal and cardiac muscle, adrenal, thyroid, kidney and pancreas.

Its subcellular location is the nucleus. Functionally, essential component of the NELF complex, a complex that negatively regulates the elongation of transcription by RNA polymerase II. The NELF complex, which acts via an association with the DSIF complex and causes transcriptional pausing, is counteracted by the P-TEFb kinase complex. (Microbial infection) The NELF complex is involved in HIV-1 latency possibly involving recruitment of PCF11 to paused RNA polymerase II. This Homo sapiens (Human) protein is Negative elongation factor C/D (NELFCD).